A 511-amino-acid polypeptide reads, in one-letter code: Potassium voltage-gated channel subfamily A member 10 (511 aa).

Residues 22–50 form a disordered region; sequence IQEEPGYATDFDSTSPKGRPGGSSFSNGK. A helical transmembrane segment spans residues 218–238; that stretch reads VAVVSVLVVVISITIFCLETL. N-linked (GlcNAc...) asparagine glycosylation occurs at Asn-256. Residues 271-292 traverse the membrane as a helical segment; sequence FFMVESTCIVWFTFELVLRFVV. The S-palmitoyl cysteine moiety is linked to residue Cys-293. Residues 303 to 323 traverse the membrane as a helical segment; that stretch reads IMNIIDIISIIPYFATLITEL. Residue Asn-334 is glycosylated (N-linked (GlcNAc...) asparagine). The helical; Voltage-sensor transmembrane segment at 339–358 threads the bilayer; that stretch reads ILRIIRLVRVFRIFKLSRHS. A helical transmembrane segment spans residues 375–395; that stretch reads LGLLIFFLFIGVILFSSAVYF. The Selectivity filter motif lies at 421–426; that stretch reads TVGYGD. The helical transmembrane segment at 436–456 threads the bilayer; that stretch reads IVGTLCAIAGVLTIALPVPVI. Residues 489–511 are disordered; the sequence is SRMGSTDSLNKTNGGCSTEKSRK. Asn-498 is a glycosylation site (N-linked (GlcNAc...) asparagine).

Belongs to the potassium channel family. A (Shaker) (TC 1.A.1.2) subfamily. Kv1.8/KCNA10 sub-subfamily. As to quaternary structure, homotetramer. Interacts with KCN4B/POMP. Interaction with KCN4B/POMP is necessary for the modulation of channel activity by cAMP. As to expression, detected in kidney, in proximal tubules, glomerular endothelium, in vascular endothelium and in smooth muscle cells.

The protein resides in the membrane. It carries out the reaction K(+)(in) = K(+)(out). Its activity is regulated as follows. The channel activity is up-regulated by cAMP. Voltage-gated potassium ion channel that mediates K(+) permeability of excitable membranes. When opened in response to the voltage difference across the membrane, KCNA10 channel selectively allows the flow of potassium ions across the membrane down their electrochemical gradient. The chain is Potassium voltage-gated channel subfamily A member 10 from Homo sapiens (Human).